We begin with the raw amino-acid sequence, 431 residues long: Enolase (431 aa).

Glutamine 166 lines the (2R)-2-phosphoglycerate pocket. Glutamate 208 acts as the Proton donor in catalysis. Positions 245, 288, and 315 each coordinate Mg(2+). Residues lysine 340, arginine 369, serine 370, and lysine 391 each coordinate (2R)-2-phosphoglycerate. Catalysis depends on lysine 340, which acts as the Proton acceptor.

This sequence belongs to the enolase family. It depends on Mg(2+) as a cofactor.

The protein resides in the cytoplasm. It is found in the secreted. It localises to the cell surface. It carries out the reaction (2R)-2-phosphoglycerate = phosphoenolpyruvate + H2O. The protein operates within carbohydrate degradation; glycolysis; pyruvate from D-glyceraldehyde 3-phosphate: step 4/5. In terms of biological role, catalyzes the reversible conversion of 2-phosphoglycerate (2-PG) into phosphoenolpyruvate (PEP). It is essential for the degradation of carbohydrates via glycolysis. The chain is Enolase from Clostridium tetani (strain Massachusetts / E88).